Reading from the N-terminus, the 921-residue chain is Sodium/calcium exchanger 2 (921 aa).

The first 20 residues, 1-20 (MAPLALMGVVLLLGVPHCLG), serve as a signal peptide directing secretion. The tract at residues 23–42 (TPTPSLPPPTANDSDASPEG) is disordered. A helical transmembrane segment spans residues 69 to 89 (VARAVVYFVAMVYMFLGVSII). 2 N-linked (GlcNAc...) asparagine glycosylation sites follow: Asn125 and Asn130. 4 helical membrane-spanning segments follow: residues 131–151 (LTLMALGSSAPEILLTVIEVC), 165–185 (IVGSAAFNMFVVIAVCVYVIP), 197–217 (VFFVTASWSIFAYVWLYLILA), and 226–246 (VWEALLTLIFFPVCVVFAWMA). The interval 248–267 (KRLLFYKYVYKRYRTDPRSG) is putative calmodulin-binding region. A disordered region spans residues 371–391 (HAADAARRPGATDGAPDDEDD). Calx-beta domains lie at 389–482 (EDDG…FVRL) and 512–611 (ATVT…FIEL). Ca(2+)-binding residues include Glu407, Asp443, Asp468, Asp469, Ile471, Glu473, Glu476, Asp518, Asp519, Asp520, Glu536, Asp598, Glu599, and Glu600. A Phosphoserine modification is found at Ser622. A Ca(2+)-binding site is contributed by Glu665. Transmembrane regions (helical) follow at residues 721-741 (CFDYVMHFLTVFWKVLFACVP), 749-769 (WACFGVCILVIGVLTALIGDL), 786-806 (VVFVALGTSIPDTFASKVAAL), 823-843 (AVNVFLGLGVAWSVAAVYWAV), 855-875 (LAFSVTLFTVFAFVCIAVLLY), and 893-913 (LATTALFLGLWFLYILFSSLE).

This sequence belongs to the Ca(2+):cation antiporter (CaCA) (TC 2.A.19) family. SLC8 subfamily. As to expression, detected in kidney cortex, in distal convoluted tubules and connecting segments. Detected in brain and spinal cord (at protein level). Detected in brain, especially in hippocampus CA1, CA2 and CA3 fiels, dentate gyrus, cerebellum and brain cortex.

The protein localises to the cell membrane. It is found in the basolateral cell membrane. The catalysed reaction is Ca(2+)(in) + 3 Na(+)(out) = Ca(2+)(out) + 3 Na(+)(in). Calcium transport is down-regulated by Na(+) and stimulated by Ca(2+). Mediates the electrogenic exchange of Ca(2+) against Na(+) ions across the cell membrane, and thereby contributes to the regulation of cytoplasmic Ca(2+) levels and Ca(2+)-dependent cellular processes. Contributes to cellular Ca(2+) homeostasis in excitable cells. Contributes to the rapid decrease of cytoplasmic Ca(2+) levels back to baseline after neuronal activation, and thereby contributes to modulate synaptic plasticity, learning and memory. Plays a role in regulating urinary Ca(2+) and Na(+) excretion. The protein is Sodium/calcium exchanger 2 of Mus musculus (Mouse).